We begin with the raw amino-acid sequence, 215 residues long: Probable phosphoglycerate mutase GpmB (215 aa).

Residues 8 to 15 (RHGETQWN), 21 to 22 (QG), R58, K60, 82 to 85 (ELDM), 104 to 105 (RR), and 151 to 152 (GI) each bind substrate. The active-site Tele-phosphohistidine intermediate is H9. E82 functions as the Proton donor/acceptor in the catalytic mechanism.

The protein belongs to the phosphoglycerate mutase family. GpmB subfamily.

The enzyme catalyses (2R)-2-phosphoglycerate = (2R)-3-phosphoglycerate. It participates in carbohydrate degradation; glycolysis; pyruvate from D-glyceraldehyde 3-phosphate: step 3/5. The sequence is that of Probable phosphoglycerate mutase GpmB from Salmonella choleraesuis (strain SC-B67).